A 175-amino-acid chain; its full sequence is NADH-quinone oxidoreductase subunit I 1 (175 aa).

4Fe-4S ferredoxin-type domains lie at 44 to 74 and 90 to 119; these read LNRW…VESA and RVYQ…MIND. Cys54, Cys57, Cys60, Cys64, Cys99, Cys102, Cys105, and Cys109 together coordinate [4Fe-4S] cluster.

This sequence belongs to the complex I 23 kDa subunit family. NDH-1 is composed of 14 different subunits. Subunits NuoA, H, J, K, L, M, N constitute the membrane sector of the complex. It depends on [4Fe-4S] cluster as a cofactor.

Its subcellular location is the cell membrane. It catalyses the reaction a quinone + NADH + 5 H(+)(in) = a quinol + NAD(+) + 4 H(+)(out). Functionally, NDH-1 shuttles electrons from NADH, via FMN and iron-sulfur (Fe-S) centers, to quinones in the respiratory chain. The immediate electron acceptor for the enzyme in this species is believed to be menaquinone. Couples the redox reaction to proton translocation (for every two electrons transferred, four hydrogen ions are translocated across the cytoplasmic membrane), and thus conserves the redox energy in a proton gradient. In Mycolicibacterium paratuberculosis (strain ATCC BAA-968 / K-10) (Mycobacterium paratuberculosis), this protein is NADH-quinone oxidoreductase subunit I 1.